The sequence spans 60 residues: Large ribosomal subunit protein uL30 (60 aa).

It belongs to the universal ribosomal protein uL30 family. In terms of assembly, part of the 50S ribosomal subunit.

The sequence is that of Large ribosomal subunit protein uL30 from Cutibacterium acnes (strain DSM 16379 / KPA171202) (Propionibacterium acnes).